A 336-amino-acid polypeptide reads, in one-letter code: Fructose-1,6-bisphosphatase class 1 (336 aa).

Positions 90, 112, 114, and 115 each coordinate Mg(2+). Substrate-binding positions include 115 to 118, Asn211, and Lys277; that span reads DGSS. Glu283 lines the Mg(2+) pocket.

The protein belongs to the FBPase class 1 family. In terms of assembly, homotetramer. The cofactor is Mg(2+).

The protein localises to the cytoplasm. It catalyses the reaction beta-D-fructose 1,6-bisphosphate + H2O = beta-D-fructose 6-phosphate + phosphate. Its pathway is carbohydrate biosynthesis; gluconeogenesis. In Pseudomonas putida (strain ATCC 700007 / DSM 6899 / JCM 31910 / BCRC 17059 / LMG 24140 / F1), this protein is Fructose-1,6-bisphosphatase class 1.